We begin with the raw amino-acid sequence, 331 residues long: tRNA-dihydrouridine(20/20a) synthase (331 aa).

FMN contacts are provided by residues 18–20 and glutamine 70; that span reads PML. The active-site Proton donor is the cysteine 100. FMN is bound by residues lysine 139, histidine 172, 212-214, and 234-235; these read NGG and GR.

The protein belongs to the Dus family. DusA subfamily. It depends on FMN as a cofactor.

The enzyme catalyses 5,6-dihydrouridine(20) in tRNA + NADP(+) = uridine(20) in tRNA + NADPH + H(+). It carries out the reaction 5,6-dihydrouridine(20) in tRNA + NAD(+) = uridine(20) in tRNA + NADH + H(+). The catalysed reaction is 5,6-dihydrouridine(20a) in tRNA + NADP(+) = uridine(20a) in tRNA + NADPH + H(+). It catalyses the reaction 5,6-dihydrouridine(20a) in tRNA + NAD(+) = uridine(20a) in tRNA + NADH + H(+). Functionally, catalyzes the synthesis of 5,6-dihydrouridine (D), a modified base found in the D-loop of most tRNAs, via the reduction of the C5-C6 double bond in target uridines. Specifically modifies U20 and U20a in tRNAs. This chain is tRNA-dihydrouridine(20/20a) synthase, found in Escherichia coli O6:H1 (strain CFT073 / ATCC 700928 / UPEC).